We begin with the raw amino-acid sequence, 125 residues long: Small ribosomal subunit protein bS6 (125 aa).

This sequence belongs to the bacterial ribosomal protein bS6 family.

In terms of biological role, binds together with bS18 to 16S ribosomal RNA. This is Small ribosomal subunit protein bS6 from Baumannia cicadellinicola subsp. Homalodisca coagulata.